Reading from the N-terminus, the 1377-residue chain is DNA-directed RNA polymerase subunit beta (1377 aa).

Belongs to the RNA polymerase beta chain family. As to quaternary structure, the RNAP catalytic core consists of 2 alpha, 1 beta, 1 beta' and 1 omega subunit. When a sigma factor is associated with the core the holoenzyme is formed, which can initiate transcription.

It carries out the reaction RNA(n) + a ribonucleoside 5'-triphosphate = RNA(n+1) + diphosphate. DNA-dependent RNA polymerase catalyzes the transcription of DNA into RNA using the four ribonucleoside triphosphates as substrates. The chain is DNA-directed RNA polymerase subunit beta from Brucella melitensis biotype 2 (strain ATCC 23457).